The primary structure comprises 469 residues: tRNA-2-methylthio-N(6)-dimethylallyladenosine synthase (469 aa).

The MTTase N-terminal domain maps to 22 to 142 (RKVFIKTYGC…LPEALRRAKE (121 aa)). [4Fe-4S] cluster is bound by residues Cys-31, Cys-67, Cys-105, Cys-183, Cys-187, and Cys-190. The 233-residue stretch at 169 to 401 (RARGVTAFLT…QALLLKQQQE (233 aa)) folds into the Radical SAM core domain. The TRAM domain occupies 404–466 (ESCIGKEIDL…TNSLFAERAE (63 aa)).

Belongs to the methylthiotransferase family. MiaB subfamily. As to quaternary structure, monomer. [4Fe-4S] cluster is required as a cofactor.

It localises to the cytoplasm. It carries out the reaction N(6)-dimethylallyladenosine(37) in tRNA + (sulfur carrier)-SH + AH2 + 2 S-adenosyl-L-methionine = 2-methylsulfanyl-N(6)-dimethylallyladenosine(37) in tRNA + (sulfur carrier)-H + 5'-deoxyadenosine + L-methionine + A + S-adenosyl-L-homocysteine + 2 H(+). Catalyzes the methylthiolation of N6-(dimethylallyl)adenosine (i(6)A), leading to the formation of 2-methylthio-N6-(dimethylallyl)adenosine (ms(2)i(6)A) at position 37 in tRNAs that read codons beginning with uridine. This Rhizobium etli (strain ATCC 51251 / DSM 11541 / JCM 21823 / NBRC 15573 / CFN 42) protein is tRNA-2-methylthio-N(6)-dimethylallyladenosine synthase.